A 202-amino-acid chain; its full sequence is Pyridoxal 5'-phosphate synthase subunit PdxT (202 aa).

Position 52–54 (52–54 (GES)) interacts with L-glutamine. Catalysis depends on Cys84, which acts as the Nucleophile. L-glutamine is bound by residues Arg120 and 148–149 (IR). Catalysis depends on charge relay system residues His185 and Glu187.

It belongs to the glutaminase PdxT/SNO family. In the presence of PdxS, forms a dodecamer of heterodimers. Only shows activity in the heterodimer.

The catalysed reaction is aldehydo-D-ribose 5-phosphate + D-glyceraldehyde 3-phosphate + L-glutamine = pyridoxal 5'-phosphate + L-glutamate + phosphate + 3 H2O + H(+). The enzyme catalyses L-glutamine + H2O = L-glutamate + NH4(+). Its pathway is cofactor biosynthesis; pyridoxal 5'-phosphate biosynthesis. Functionally, catalyzes the hydrolysis of glutamine to glutamate and ammonia as part of the biosynthesis of pyridoxal 5'-phosphate. The resulting ammonia molecule is channeled to the active site of PdxS. This chain is Pyridoxal 5'-phosphate synthase subunit PdxT, found in Methanopyrus kandleri (strain AV19 / DSM 6324 / JCM 9639 / NBRC 100938).